Reading from the N-terminus, the 275-residue chain is Phosphatidylglycerol--prolipoprotein diacylglyceryl transferase (275 aa).

The next 7 helical transmembrane spans lie at 22–42 (LSVRWYGLMYLFGFAFAMWLA), 61–81 (LLFYGFLGVILGGRVGYVLFY), 96–116 (IWTGGMSFHGGLIGVITAMIW), 125–145 (FFTVADFVAPLIPFGLGVGRI), 177–197 (SQLYQFALEGVVLFIILNLFW), 204–224 (GAISGLFLFCYGLFRFLVEFV), and 238–258 (ISMGQILSMPMIVAGALMVWA). An a 1,2-diacyl-sn-glycero-3-phospho-(1'-sn-glycerol)-binding site is contributed by Arg-144.

It belongs to the Lgt family.

The protein resides in the cell inner membrane. It catalyses the reaction L-cysteinyl-[prolipoprotein] + a 1,2-diacyl-sn-glycero-3-phospho-(1'-sn-glycerol) = an S-1,2-diacyl-sn-glyceryl-L-cysteinyl-[prolipoprotein] + sn-glycerol 1-phosphate + H(+). It participates in protein modification; lipoprotein biosynthesis (diacylglyceryl transfer). In terms of biological role, catalyzes the transfer of the diacylglyceryl group from phosphatidylglycerol to the sulfhydryl group of the N-terminal cysteine of a prolipoprotein, the first step in the formation of mature lipoproteins. In Aeromonas salmonicida (strain A449), this protein is Phosphatidylglycerol--prolipoprotein diacylglyceryl transferase.